Reading from the N-terminus, the 95-residue chain is PIK3R3 upstream open reading frame protein (95 aa).

Residues 1-27 are disordered; it reads MGPSRLVRGPRPQGMRSPYRRPGMGWP.

The chain is PIK3R3 upstream open reading frame protein from Homo sapiens (Human).